A 244-amino-acid chain; its full sequence is Uridylate kinase (244 aa).

Position 17–20 (K17–G20) interacts with ATP. G59 lines the UMP pocket. Residues G60 and R64 each contribute to the ATP site. Residues D79 and T140 to T147 contribute to the UMP site. The ATP site is built by T167, Y173, and D176.

It belongs to the UMP kinase family. In terms of assembly, homohexamer.

It localises to the cytoplasm. It catalyses the reaction UMP + ATP = UDP + ADP. It participates in pyrimidine metabolism; CTP biosynthesis via de novo pathway; UDP from UMP (UMPK route): step 1/1. Inhibited by UTP. Catalyzes the reversible phosphorylation of UMP to UDP. In Hahella chejuensis (strain KCTC 2396), this protein is Uridylate kinase.